Here is a 548-residue protein sequence, read N- to C-terminus: Chaperonin GroEL (548 aa).

Residues 30–33 (TLGP), Lys-51, 87–91 (DGTTT), Gly-415, 478–480 (NAA), and Asp-494 each bind ATP.

The protein belongs to the chaperonin (HSP60) family. In terms of assembly, forms a cylinder of 14 subunits composed of two heptameric rings stacked back-to-back. Interacts with the co-chaperonin GroES.

The protein localises to the cytoplasm. It carries out the reaction ATP + H2O + a folded polypeptide = ADP + phosphate + an unfolded polypeptide.. Functionally, together with its co-chaperonin GroES, plays an essential role in assisting protein folding. The GroEL-GroES system forms a nano-cage that allows encapsulation of the non-native substrate proteins and provides a physical environment optimized to promote and accelerate protein folding. The chain is Chaperonin GroEL from Janthinobacterium sp. (strain Marseille) (Minibacterium massiliensis).